The following is a 1060-amino-acid chain: DNA topoisomerase 1 (1060 aa).

The region spanning 1–141 is the Toprim domain; sequence MILVIAEKPN…KRMKFSALTK (141 aa). 2 residues coordinate Mg(2+): Glu7 and Asp107. One can recognise a Topo IA-type catalytic domain in the interval 156 to 947; the sequence is NFGMANAGIA…EAKIRLTKIL (792 aa). Residues 196–201 are interaction with DNA; the sequence is STGRVQ. Residues 482 to 591 enclose the DOD-type homing endonuclease domain; it reads LIGYLAGKGG…IKVYLQLLGI (110 aa). The active-site O-(5'-phospho-DNA)-tyrosine intermediate is Tyr690. Residues 978–1006 form a C4-type 1 zinc finger; it reads CPKCGGDLIVKYNEKTGKRFVGCSNWPKC. The C4-type 2; atypical zinc-finger motif lies at 1025-1050; it reads CCNGAPVVIIREKDGREWEICLDMNC.

The protein belongs to the type IA topoisomerase family. As to quaternary structure, monomer. Mg(2+) is required as a cofactor. This protein undergoes a protein self splicing that involves a post-translational excision of the intervening region (intein) followed by peptide ligation.

It carries out the reaction ATP-independent breakage of single-stranded DNA, followed by passage and rejoining.. In terms of biological role, releases the supercoiling and torsional tension of DNA, which is introduced during the DNA replication and transcription, by transiently cleaving and rejoining one strand of the DNA duplex. Introduces a single-strand break via transesterification at a target site in duplex DNA. The scissile phosphodiester is attacked by the catalytic tyrosine of the enzyme, resulting in the formation of a DNA-(5'-phosphotyrosyl)-enzyme intermediate and the expulsion of a 3'-OH DNA strand. The free DNA strand then undergoes passage around the unbroken strand, thus removing DNA supercoils. Finally, in the religation step, the DNA 3'-OH attacks the covalent intermediate to expel the active-site tyrosine and restore the DNA phosphodiester backbone. This Pyrococcus furiosus (strain ATCC 43587 / DSM 3638 / JCM 8422 / Vc1) protein is DNA topoisomerase 1 (topA).